Consider the following 249-residue polypeptide: MSRVLRLGVNIDHVATIRNARGGDHPDPLRAAKIAAEAGADGITAHLREDRRHIGDRDIARLRDEIDLPLNLEMAATAEMLAIALRHRPHAACIVPEKREERTTEGGLDVVGGAVHLAPIITALGEAGVRVSLFIEPDLRQLDAARALGAPVVELHTGAYCDAAAGPAREAQFLRIDKAARHAQALGLECHAGHGLTYDTVEPVAALPAIAELNIGHFLIGEAIFVGLHQAIARMRAHMDAALRGGVAA.

Asparagine 10 is a binding site for 3-amino-2-oxopropyl phosphate. 12-13 (DH) provides a ligand contact to 1-deoxy-D-xylulose 5-phosphate. Residue arginine 21 coordinates 3-amino-2-oxopropyl phosphate. The Proton acceptor role is filled by histidine 46. 1-deoxy-D-xylulose 5-phosphate contacts are provided by arginine 48 and histidine 53. The Proton acceptor role is filled by glutamate 73. Position 103 (threonine 103) interacts with 1-deoxy-D-xylulose 5-phosphate. Histidine 194 functions as the Proton donor in the catalytic mechanism. Residues glycine 195 and 216–217 (GH) contribute to the 3-amino-2-oxopropyl phosphate site.

The protein belongs to the PNP synthase family. In terms of assembly, homooctamer; tetramer of dimers.

Its subcellular location is the cytoplasm. The enzyme catalyses 3-amino-2-oxopropyl phosphate + 1-deoxy-D-xylulose 5-phosphate = pyridoxine 5'-phosphate + phosphate + 2 H2O + H(+). It functions in the pathway cofactor biosynthesis; pyridoxine 5'-phosphate biosynthesis; pyridoxine 5'-phosphate from D-erythrose 4-phosphate: step 5/5. Its function is as follows. Catalyzes the complicated ring closure reaction between the two acyclic compounds 1-deoxy-D-xylulose-5-phosphate (DXP) and 3-amino-2-oxopropyl phosphate (1-amino-acetone-3-phosphate or AAP) to form pyridoxine 5'-phosphate (PNP) and inorganic phosphate. The protein is Pyridoxine 5'-phosphate synthase of Rhodospirillum rubrum (strain ATCC 11170 / ATH 1.1.1 / DSM 467 / LMG 4362 / NCIMB 8255 / S1).